The primary structure comprises 468 residues: Transcription factor ste11 (468 aa).

Residues 1–21 (MSASLTAEQKDQKSSVKRPLN) are disordered. Residues 16–80 (VKRPLNSFML…KHMLENPEYK (65 aa)) constitute a DNA-binding region (HMG box). Thr-173 bears the Phosphothreonine mark. A phosphoserine mark is found at Ser-209, Ser-211, and Ser-218. 2 stretches are compositionally biased toward polar residues: residues 249–263 (PSLEANLPQNSSNCS) and 274–285 (GTVSEQSNSDSP). Positions 249 to 290 (PSLEANLPQNSSNCSARRVPKFDSKGTVSEQSNSDSPELSAD) are disordered.

Phosphorylation results in inactivation.

The protein localises to the nucleus. Its subcellular location is the cytoplasm. Its function is as follows. Key transcription factor for sexual development. Activates the transcription of the matp, matm, mei2, mfm, ste6 and rgs1 genes. Binds specifically to a DNA fragment carrying a 10-base motif 5'-TTCTTTGTTY-3'. The chain is Transcription factor ste11 (ste11) from Schizosaccharomyces pombe (strain 972 / ATCC 24843) (Fission yeast).